The primary structure comprises 473 residues: Glutamate--tRNA ligase (473 aa).

The 'HIGH' region signature appears at 9 to 19; sequence PSPTGELHLGS. The 'KMSKS' region signature appears at 237 to 241; that stretch reads KLSKK. Position 240 (Lys240) interacts with ATP.

Belongs to the class-I aminoacyl-tRNA synthetase family. Glutamate--tRNA ligase type 1 subfamily. As to quaternary structure, monomer.

It is found in the cytoplasm. It carries out the reaction tRNA(Glu) + L-glutamate + ATP = L-glutamyl-tRNA(Glu) + AMP + diphosphate. In terms of biological role, catalyzes the attachment of glutamate to tRNA(Glu) in a two-step reaction: glutamate is first activated by ATP to form Glu-AMP and then transferred to the acceptor end of tRNA(Glu). The protein is Glutamate--tRNA ligase of Wigglesworthia glossinidia brevipalpis.